We begin with the raw amino-acid sequence, 78 residues long: Small ribosomal subunit protein bS18 (78 aa).

Belongs to the bacterial ribosomal protein bS18 family. Part of the 30S ribosomal subunit. Forms a tight heterodimer with protein bS6.

Its function is as follows. Binds as a heterodimer with protein bS6 to the central domain of the 16S rRNA, where it helps stabilize the platform of the 30S subunit. This chain is Small ribosomal subunit protein bS18, found in Lacticaseibacillus casei (strain BL23) (Lactobacillus casei).